Reading from the N-terminus, the 567-residue chain is Vacuolar fusion protein MON1 homolog (567 aa).

Disordered stretches follow at residues 1 to 52 (MDMD…DDEG) and 65 to 129 (TSAS…DDTS). Positions 7 to 19 (TNNPSPPGPPDSP) are enriched in pro residues. A compositionally biased stretch (acidic residues) spans 43–52 (DDYDDDDDEG).

Belongs to the MON1/SAND family. Interacts with CCZ1A, CCZ1B and RABF2B.

It localises to the endosome. The protein localises to the prevacuolar compartment. Functionally, plays an important role in membrane trafficking through the secretory apparatus. In complex with CCZ1, acts as a guanine exchange factor (GEF) for Rab7 protein family. Promotes the exchange of GDP to GTP, converting it from an inactive GDP-bound form into an active GTP-bound form. The active form is involved in protein trafficking from prevacuolar compartments (PVCs) to vacuoles. May serve as a linker between Rab5 and Rab7 protein families in PVCs and mediate PVC maturation. The protein is Vacuolar fusion protein MON1 homolog of Oryza sativa subsp. japonica (Rice).